Reading from the N-terminus, the 220-residue chain is UPF0319 protein Ent638_1476 (220 aa).

The N-terminal stretch at 1 to 20 (MKTGIVSAVLALVMPVCVYA) is a signal peptide.

It belongs to the UPF0319 family.

The sequence is that of UPF0319 protein Ent638_1476 from Enterobacter sp. (strain 638).